A 170-amino-acid polypeptide reads, in one-letter code: Putative zinc finger protein 542 (170 aa).

In terms of domain architecture, KRAB spans 1 to 42 (MLENYQNLVWLGLSISKSVISLLEKRKLPWIMAKEEIRGPLP). 2 consecutive C2H2-type zinc fingers follow at residues 98–120 (NVCK…KRNH) and 126–148 (NQCL…QRIH). The segment at 154–170 (YKCNECIKTFNQRAHLT) adopts a C2H2-type 3; degenerate zinc-finger fold.

Belongs to the krueppel C2H2-type zinc-finger protein family.

It localises to the nucleus. Functionally, may be involved in transcriptional regulation. The sequence is that of Putative zinc finger protein 542 (ZNF542P) from Homo sapiens (Human).